A 456-amino-acid polypeptide reads, in one-letter code: F-box/FBD/LRR-repeat protein At1g13780 (456 aa).

The F-box domain occupies 9–55 (FDRISELPESLISQILLHLPTKASVKTSVLSTRWKNLWLNVPGLDLN). LRR repeat units lie at residues 197–220 (LEEL…SLKR), 243–266 (APGL…NLTS), 302–325 (ISSV…SKVG), and 355–379 (FPNL…ELVN). One can recognise an FBD domain in the interval 372–424 (MEKFELVNVPRCFVSTLEHVEIKGLFDWGEQDMKIASYFLENSAVLKKLILSF).

This Arabidopsis thaliana (Mouse-ear cress) protein is F-box/FBD/LRR-repeat protein At1g13780.